A 587-amino-acid polypeptide reads, in one-letter code: MVAAAMLLRSCPVLSKGPTGLLGKVAKTYQFLFGIGRCPILATQGPTCSQIHLKATKAGADSPSWTKSHCPFMLSELQDRKSKIVQRAAPEVQEDVKTFKTDLLSFMESTTRSQSVPRFQDPEQTGGAPPLLIQNNMTGSQAFGYDQFFRDKIMEKKQDHTYRVFKTVNRWANAYPFAQHFSEASMDSKDVSVWCSNDYLGISRHPRVLQAIEETLKNHGAGAGGTRNISGTSKFHVELEQELAELHHKDSALLFSSCFVANDSTLFTLAKLLPGCEIYSDAGNHASMIQGIRNSGAVKFVFRHNDPGHLKKLLEKSDPKTPKIVAFETVHSMDGAICPLEELCDVAHQYGALTFVDEVHAVGLYGTRGAGIGERDGIMHKLDIISGTLGKAFGCVGGYIASTRDLVDMVRSYAAGFIFTTSLPPMVLSGALESVRLLKGEEGQALRRAHQRNVKHMRQLLMDRGFPVIPCPSHIIPIRVGNAALNSKICDLLLAKHSIYVQAINYPTVPRGEELLRLAPSPHHSPQMMENFVEKLLLAWTEVGLPLQDVSVAACNFCRRPVHFELMSEWERSYFGNMGPQYVTTYA.

A mitochondrion-targeting transit peptide spans 1–49 (MVAAAMLLRSCPVLSKGPTGLLGKVAKTYQFLFGIGRCPILATQGPTCS). A succinyl-CoA-binding site is contributed by arginine 163. Residues cysteine 258 and phenylalanine 259 each contribute to the pyridoxal 5'-phosphate site. 2 residues coordinate succinyl-CoA: serine 280 and lysine 299. Residues serine 332, histidine 360, and threonine 388 each coordinate pyridoxal 5'-phosphate. Lysine 391 is an active-site residue. Lysine 391 carries the post-translational modification N6-(pyridoxal phosphate)lysine. The pyridoxal 5'-phosphate site is built by threonine 420 and threonine 421. Threonine 508 is a succinyl-CoA binding site.

Belongs to the class-II pyridoxal-phosphate-dependent aminotransferase family. As to quaternary structure, homodimer. Interacts with SUCLA2. Requires pyridoxal 5'-phosphate as cofactor. As to expression, erythroid-specific.

The protein resides in the mitochondrion inner membrane. It catalyses the reaction succinyl-CoA + glycine + H(+) = 5-aminolevulinate + CO2 + CoA. It functions in the pathway porphyrin-containing compound metabolism; protoporphyrin-IX biosynthesis; 5-aminolevulinate from glycine: step 1/1. In terms of biological role, catalyzes the pyridoxal 5'-phosphate (PLP)-dependent condensation of succinyl-CoA and glycine to form aminolevulinic acid (ALA), with CoA and CO2 as by-products. Contributes significantly to heme formation during erythropoiesis. The sequence is that of 5-aminolevulinate synthase, erythroid-specific, mitochondrial (Alas2) from Rattus norvegicus (Rat).